A 364-amino-acid polypeptide reads, in one-letter code: Mannonate dehydratase (364 aa).

Belongs to the mannonate dehydratase family. The cofactor is Fe(2+). Mn(2+) serves as cofactor.

It catalyses the reaction D-mannonate = 2-dehydro-3-deoxy-D-gluconate + H2O. The protein operates within carbohydrate metabolism; pentose and glucuronate interconversion. Catalyzes the dehydration of D-mannonate. The polypeptide is Mannonate dehydratase (Streptococcus equi subsp. zooepidemicus (strain MGCS10565)).